The following is a 118-amino-acid chain: Small ribosomal subunit protein uS13 (118 aa).

The disordered stretch occupies residues 93 to 118 (RGLPVRGQRTKTNARTRKGPRKPIRK).

Belongs to the universal ribosomal protein uS13 family. In terms of assembly, part of the 30S ribosomal subunit. Forms a loose heterodimer with protein S19. Forms two bridges to the 50S subunit in the 70S ribosome.

Functionally, located at the top of the head of the 30S subunit, it contacts several helices of the 16S rRNA. In the 70S ribosome it contacts the 23S rRNA (bridge B1a) and protein L5 of the 50S subunit (bridge B1b), connecting the 2 subunits; these bridges are implicated in subunit movement. Contacts the tRNAs in the A and P-sites. This chain is Small ribosomal subunit protein uS13, found in Pseudomonas paraeruginosa (strain DSM 24068 / PA7) (Pseudomonas aeruginosa (strain PA7)).